A 122-amino-acid chain; its full sequence is MIQQESRLKVADNSGAREILVIKVLGGSYRKTGNIGDVVVATVKQATPGGVVKKADVVKAVIVRTKSGARRADGSYIKFDENAAVIINADKSPRGTRIFGPVARELRDGDFMKIVSLAPEVL.

This sequence belongs to the universal ribosomal protein uL14 family. Part of the 50S ribosomal subunit. Forms a cluster with proteins L3 and L19. In the 70S ribosome, L14 and L19 interact and together make contacts with the 16S rRNA in bridges B5 and B8.

Its function is as follows. Binds to 23S rRNA. Forms part of two intersubunit bridges in the 70S ribosome. This chain is Large ribosomal subunit protein uL14, found in Lacticaseibacillus casei (strain BL23) (Lactobacillus casei).